A 132-amino-acid polypeptide reads, in one-letter code: Fatty acid-binding protein 2 (132 aa).

Position 2 is an N-acetylserine (S2). Hexadecanoate contacts are provided by residues Q40 and 128–130 (RYY).

It belongs to the calycin superfamily. Fatty-acid binding protein (FABP) family. As to quaternary structure, monomer. Midgut.

The protein localises to the cytoplasm. In terms of biological role, binds fatty acids in a 1:1 molar ratio. The chain is Fatty acid-binding protein 2 (MFB2) from Manduca sexta (Tobacco hawkmoth).